We begin with the raw amino-acid sequence, 171 residues long: Translationally-controlled tumor protein homolog (171 aa).

A TCTP domain is found at 1-171 (MIIYKDIITG…FKDGLEIEKC (171 aa)).

This sequence belongs to the TCTP family.

The protein resides in the cytoplasm. Functionally, involved in calcium binding and microtubule stabilization. The polypeptide is Translationally-controlled tumor protein homolog (tpt1) (Labeo rohita (Indian major carp)).